The chain runs to 101 residues: MAKKSMINRDIKRTKLVEKYKVKRLELKKIIKSINVSDEERFQATIKLQALPRDASPTRQRNRCALTGRPHGFYRKFGLARTKLRERTMNGEAPGLSKASW.

The protein belongs to the universal ribosomal protein uS14 family. As to quaternary structure, part of the 30S ribosomal subunit. Contacts proteins S3 and S10.

In terms of biological role, binds 16S rRNA, required for the assembly of 30S particles and may also be responsible for determining the conformation of the 16S rRNA at the A site. This Ruthia magnifica subsp. Calyptogena magnifica protein is Small ribosomal subunit protein uS14.